Here is a 400-residue protein sequence, read N- to C-terminus: CinA-like protein (400 aa).

Belongs to the CinA family.

This is CinA-like protein from Sulfurihydrogenibium sp. (strain YO3AOP1).